The sequence spans 149 residues: Large ribosomal subunit protein bL9 (149 aa).

It belongs to the bacterial ribosomal protein bL9 family.

Its function is as follows. Binds to the 23S rRNA. The protein is Large ribosomal subunit protein bL9 of Campylobacter curvus (strain 525.92).